A 121-amino-acid polypeptide reads, in one-letter code: Large ribosomal subunit protein bL12 (121 aa).

The protein belongs to the bacterial ribosomal protein bL12 family. In terms of assembly, homodimer. Part of the ribosomal stalk of the 50S ribosomal subunit. Forms a multimeric L10(L12)X complex, where L10 forms an elongated spine to which 2 to 4 L12 dimers bind in a sequential fashion. Binds GTP-bound translation factors.

Forms part of the ribosomal stalk which helps the ribosome interact with GTP-bound translation factors. Is thus essential for accurate translation. The chain is Large ribosomal subunit protein bL12 from Acinetobacter baylyi (strain ATCC 33305 / BD413 / ADP1).